Here is a 1409-residue protein sequence, read N- to C-terminus: Mediator of RNA polymerase II transcription subunit 23 (1409 aa).

The disordered stretch occupies residues 1359–1409; sequence ASAAGQGPAQGGPQSQQPQTTGQAGGQPSVPQQQQQTQQQQPQQQQQVQQQ.

This sequence belongs to the Mediator complex subunit 23 family. As to quaternary structure, component of the Mediator complex.

It is found in the nucleus. In terms of biological role, component of the Mediator complex, a coactivator involved in the regulated transcription of nearly all RNA polymerase II-dependent genes. Mediator functions as a bridge to convey information from gene-specific regulatory proteins to the basal RNA polymerase II transcription machinery. Mediator is recruited to promoters by direct interactions with regulatory proteins and serves as a scaffold for the assembly of a functional preinitiation complex with RNA polymerase II and the general transcription factors. This Aedes aegypti (Yellowfever mosquito) protein is Mediator of RNA polymerase II transcription subunit 23 (MED23).